The primary structure comprises 272 residues: Alcohol dehydrogenase-related 31 kDa protein (272 aa).

NAD(+) is bound at residue 11–34 (YVADCGGIALETSKVLMTKNIAKL). Ser-139 lines the substrate pocket. Residue Tyr-152 is the Proton acceptor of the active site.

It belongs to the short-chain dehydrogenases/reductases (SDR) family.

The sequence is that of Alcohol dehydrogenase-related 31 kDa protein (Adhr) from Drosophila teissieri (Fruit fly).